A 178-amino-acid chain; its full sequence is Cytochrome c-type biogenesis protein CcmE (178 aa).

The Cytoplasmic segment spans residues 1–8 (MNPRRKKR). The chain crosses the membrane as a helical; Signal-anchor for type II membrane protein span at residues 9-29 (LAIVGSILIGIGVVSGLVLYA). The Periplasmic segment spans residues 30 to 178 (LSQNIDLFFT…QLESKKTNSY (149 aa)). His143 and Tyr147 together coordinate heme. Positions 154 to 178 (EAAGQKHDKATYSDKQLESKKTNSY) are disordered. Positions 157–178 (GQKHDKATYSDKQLESKKTNSY) are enriched in basic and acidic residues.

Belongs to the CcmE/CycJ family.

The protein resides in the cell inner membrane. Its function is as follows. Heme chaperone required for the biogenesis of c-type cytochromes. Transiently binds heme delivered by CcmC and transfers the heme to apo-cytochromes in a process facilitated by CcmF and CcmH. The polypeptide is Cytochrome c-type biogenesis protein CcmE (Colwellia psychrerythraea (strain 34H / ATCC BAA-681) (Vibrio psychroerythus)).